Reading from the N-terminus, the 224-residue chain is 2,5-diamino-6-ribosylamino-4(3H)-pyrimidinone 5'-phosphate reductase (224 aa).

NADP(+)-binding positions include Thr-57, Asp-61, 82 to 85, Val-131, and 153 to 156; these read STAN and GASI.

It belongs to the HTP reductase family. In terms of assembly, homodimer.

The catalysed reaction is 2,5-diamino-6-(1-D-ribitylamino)pyrimidin-4(3H)-one 5'-phosphate + NADP(+) = 2,5-diamino-6-(1-D-ribosylamino)pyrimidin-4(3H)-one 5'-phosphate + NADPH + H(+). It catalyses the reaction 2,5-diamino-6-(1-D-ribitylamino)pyrimidin-4(3H)-one 5'-phosphate + NAD(+) = 2,5-diamino-6-(1-D-ribosylamino)pyrimidin-4(3H)-one 5'-phosphate + NADH + H(+). Its pathway is cofactor biosynthesis; riboflavin biosynthesis. In terms of biological role, catalyzes an early step in riboflavin biosynthesis, the NADPH-dependent reduction of the ribose side chain of 2,5-diamino-6-ribosylamino-4(3H)-pyrimidinone 5'-phosphate, yielding 2,5-diamino-6-ribitylamino-4(3H)-pyrimidinone 5'-phosphate. The chain is 2,5-diamino-6-ribosylamino-4(3H)-pyrimidinone 5'-phosphate reductase (ribD2) from Aquifex aeolicus (strain VF5).